Here is a 341-residue protein sequence, read N- to C-terminus: Phenylalanine--tRNA ligase alpha subunit (341 aa).

A Mg(2+)-binding site is contributed by E256.

It belongs to the class-II aminoacyl-tRNA synthetase family. Phe-tRNA synthetase alpha subunit type 1 subfamily. As to quaternary structure, tetramer of two alpha and two beta subunits. The cofactor is Mg(2+).

It localises to the cytoplasm. The enzyme catalyses tRNA(Phe) + L-phenylalanine + ATP = L-phenylalanyl-tRNA(Phe) + AMP + diphosphate + H(+). The chain is Phenylalanine--tRNA ligase alpha subunit from Chlamydia abortus (strain DSM 27085 / S26/3) (Chlamydophila abortus).